Reading from the N-terminus, the 535-residue chain is Putative subtilisin-like proteinase 2 (535 aa).

Residues 1 to 17 (MFFVGVAVLAALQSVWG) form the signal peptide. Residues 221–475 (NWIFRVLQIK…IPRLGCKGRI (255 aa)) form the Peptidase S8 domain. Residues aspartate 255 and histidine 277 each act as charge relay system in the active site. A disulfide bridge connects residues cysteine 369 and cysteine 400. Serine 420 functions as the Charge relay system in the catalytic mechanism. Residues 489–509 (IVPLVFVVLITSALLYLLLIG) traverse the membrane as a helical segment.

Belongs to the peptidase S8 family.

It is found in the membrane. Functionally, may be involved in the degradation of proteins for nutrient acquisition or possess a regulatory function by proteolytic activation of proproteins. In Encephalitozoon cuniculi (strain GB-M1) (Microsporidian parasite), this protein is Putative subtilisin-like proteinase 2 (SPL2).